The chain runs to 451 residues: tRNA-2-methylthio-N(6)-dimethylallyladenosine synthase (451 aa).

Residues 2–119 enclose the MTTase N-terminal domain; that stretch reads QNLYIKTYGC…LPDLLDACLA (118 aa). Cys11, Cys48, Cys82, Cys157, Cys161, and Cys164 together coordinate [4Fe-4S] cluster. Positions 143–377 constitute a Radical SAM core domain; the sequence is GRDGATAFVT…RINGLAQGYA (235 aa). The 64-residue stretch at 378–441 folds into the TRAM domain; sequence QALVGTQQAV…PNSLRGRAAL (64 aa).

It belongs to the methylthiotransferase family. MiaB subfamily. In terms of assembly, monomer. The cofactor is [4Fe-4S] cluster.

The protein localises to the cytoplasm. It carries out the reaction N(6)-dimethylallyladenosine(37) in tRNA + (sulfur carrier)-SH + AH2 + 2 S-adenosyl-L-methionine = 2-methylsulfanyl-N(6)-dimethylallyladenosine(37) in tRNA + (sulfur carrier)-H + 5'-deoxyadenosine + L-methionine + A + S-adenosyl-L-homocysteine + 2 H(+). In terms of biological role, catalyzes the methylthiolation of N6-(dimethylallyl)adenosine (i(6)A), leading to the formation of 2-methylthio-N6-(dimethylallyl)adenosine (ms(2)i(6)A) at position 37 in tRNAs that read codons beginning with uridine. The protein is tRNA-2-methylthio-N(6)-dimethylallyladenosine synthase of Acidithiobacillus ferrooxidans (strain ATCC 23270 / DSM 14882 / CIP 104768 / NCIMB 8455) (Ferrobacillus ferrooxidans (strain ATCC 23270)).